Reading from the N-terminus, the 103-residue chain is Large ribosomal subunit protein bL21 (103 aa).

This sequence belongs to the bacterial ribosomal protein bL21 family. In terms of assembly, part of the 50S ribosomal subunit. Contacts protein L20.

Its function is as follows. This protein binds to 23S rRNA in the presence of protein L20. In Hamiltonella defensa subsp. Acyrthosiphon pisum (strain 5AT), this protein is Large ribosomal subunit protein bL21.